A 405-amino-acid polypeptide reads, in one-letter code: Serine/threonine-protein kinase 2 (405 aa).

The Protein kinase domain occupies 54–405 (NDDFYHISTG…IFSDWINGGN (352 aa)). Residues 60 to 68 (ISTGGYGIV) and Lys84 contribute to the ATP site. Asp274 functions as the Proton acceptor in the catalytic mechanism.

Belongs to the protein kinase superfamily. Ser/Thr protein kinase family. Poxviruses subfamily. Post-translationally, phosphorylated in vivo. Autophosphorylated in vitro.

The protein resides in the host endoplasmic reticulum. It is found in the host endoplasmic reticulum-Golgi intermediate compartment. The enzyme catalyses L-seryl-[protein] + ATP = O-phospho-L-seryl-[protein] + ADP + H(+). It catalyses the reaction L-threonyl-[protein] + ATP = O-phospho-L-threonyl-[protein] + ADP + H(+). Functionally, essential serine-protein kinase involved in the early stage of virion morphogenesis. The protein is Serine/threonine-protein kinase 2 (OPG054) of Vaccinia virus (strain L-IVP) (VACV).